Consider the following 530-residue polypeptide: B3 domain-containing protein REM-like 3 (530 aa).

DNA-binding regions (TF-B3) lie at residues 11 to 103 and 144 to 241; these read KPHF…FGLS and DFVV…FPLE. Residues 251-276 are disordered; sequence SKKVKQEVEHEESVKEETNVESGKLK. A compositionally biased stretch (basic and acidic residues) spans 254 to 276; it reads VKQEVEHEESVKEETNVESGKLK. 2 consecutive DNA-binding regions (TF-B3) follow at residues 296–393 and 431–530; these read NFVV…FPLE and SFVV…WDKK.

The protein resides in the nucleus. In Arabidopsis thaliana (Mouse-ear cress), this protein is B3 domain-containing protein REM-like 3.